The following is a 235-amino-acid chain: Fibrillarin-like rRNA/tRNA 2'-O-methyltransferase (235 aa).

S-adenosyl-L-methionine contacts are provided by residues 91–92, 110–111, 137–138, and 157–160; these read TT, EF, DA, and DVAQ.

Belongs to the methyltransferase superfamily. Fibrillarin family. In terms of assembly, interacts with nop5. Component of box C/D small ribonucleoprotein (sRNP) particles that contain rpl7ae, FlpA and nop5, plus a guide RNA.

In terms of biological role, involved in pre-rRNA and tRNA processing. Utilizes the methyl donor S-adenosyl-L-methionine to catalyze the site-specific 2'-hydroxyl methylation of ribose moieties in rRNA and tRNA. Site specificity is provided by a guide RNA that base pairs with the substrate. Methylation occurs at a characteristic distance from the sequence involved in base pairing with the guide RNA. The sequence is that of Fibrillarin-like rRNA/tRNA 2'-O-methyltransferase from Pyrobaculum islandicum (strain DSM 4184 / JCM 9189 / GEO3).